Here is a 252-residue protein sequence, read N- to C-terminus: Pyridoxine 5'-phosphate synthase (252 aa).

3-amino-2-oxopropyl phosphate is bound at residue N7. Position 9-10 (9-10) interacts with 1-deoxy-D-xylulose 5-phosphate; sequence DH. R18 serves as a coordination point for 3-amino-2-oxopropyl phosphate. The active-site Proton acceptor is the H43. 1-deoxy-D-xylulose 5-phosphate contacts are provided by R45 and H50. E70 acts as the Proton acceptor in catalysis. T100 provides a ligand contact to 1-deoxy-D-xylulose 5-phosphate. Residue H190 is the Proton donor of the active site. 3-amino-2-oxopropyl phosphate is bound by residues G191 and 212–213; that span reads GH.

Belongs to the PNP synthase family. In terms of assembly, homooctamer; tetramer of dimers.

The protein localises to the cytoplasm. The catalysed reaction is 3-amino-2-oxopropyl phosphate + 1-deoxy-D-xylulose 5-phosphate = pyridoxine 5'-phosphate + phosphate + 2 H2O + H(+). It participates in cofactor biosynthesis; pyridoxine 5'-phosphate biosynthesis; pyridoxine 5'-phosphate from D-erythrose 4-phosphate: step 5/5. In terms of biological role, catalyzes the complicated ring closure reaction between the two acyclic compounds 1-deoxy-D-xylulose-5-phosphate (DXP) and 3-amino-2-oxopropyl phosphate (1-amino-acetone-3-phosphate or AAP) to form pyridoxine 5'-phosphate (PNP) and inorganic phosphate. This chain is Pyridoxine 5'-phosphate synthase, found in Synechococcus sp. (strain RCC307).